Consider the following 176-residue polypeptide: Calcineurin subunit B type 2 (176 aa).

Residue glycine 2 is the site of N-myristoyl glycine attachment. EF-hand domains lie at 18 to 53 (DEIK…QQNP), 57 to 85 (RVID…FSVK), 87 to 122 (DEEQ…MVGN), and 128 to 163 (QLQQ…MEIH). Ca(2+) is bound by residues aspartate 31, aspartate 33, serine 35, serine 37, glutamate 42, aspartate 63, aspartate 65, asparagine 67, glutamate 69, glutamate 74, aspartate 100, aspartate 102, aspartate 104, and glutamate 111. Residues 131–136 (QLVDKS) are calcineurin A binding. 5 residues coordinate Ca(2+): aspartate 141, aspartate 143, aspartate 145, arginine 147, and glutamate 152.

Belongs to the calcineurin regulatory subunit family. As to quaternary structure, forms a complex composed of a calmodulin-dependent catalytic subunit (also known as calcineurin A) and a regulatory Ca(2+)-binding subunit (also known as calcineurin B). There are three catalytic subunits, each encoded by a separate gene (PPP3CA, PPP3CB, and PPP3CC) and two regulatory subunits which are also encoded by separate genes (PPP3R1 and PPP3R2). Interacts with SPATA33 (via PQIIIT motif). In terms of tissue distribution, testis specific.

Its subcellular location is the mitochondrion. Functionally, regulatory subunit of calcineurin, a calcium-dependent, calmodulin stimulated protein phosphatase. Confers calcium sensitivity. In Rattus norvegicus (Rat), this protein is Calcineurin subunit B type 2 (Ppp3r2).